We begin with the raw amino-acid sequence, 204 residues long: Large ribosomal subunit protein eL15 (204 aa).

This sequence belongs to the eukaryotic ribosomal protein eL15 family.

This Tetrahymena thermophila (strain SB210) protein is Large ribosomal subunit protein eL15 (RPL15).